Consider the following 329-residue polypeptide: MYRFHTKRVRAAAGQVWTANLHKIRRSLKNVYQKCTTHHSYSTSYPTRASYGCDGDTLSLNEDMNLPAMLQDIKTGQTELLNQMTNIVSSISNIQEKINHYQNQMEALEARINISEDRQTATTKDMLSMKEDINTLKKKVTELESQNSYSSIHCLEVLEGQRGKEFVQLLHKLLQTETPKGTATSPDTVISSAEPERVSSYPEPTGELKKKTTSPQNITLKKNNSLQNASVGCKKVRSNIYIYPDFSTWIKLTFVHGGNWRFFLSATKLEEFIQWLLSRSTILPEEPQIIPQRDYAFTGAIGRLATICLSLFHYVYCLFGSSKEEITRL.

Residues 86-149 (NIVSSISNIQ…VTELESQNSY (64 aa)) are a coiled coil. Residues 178-191 (TPKGTATSPDTVIS) show a composition bias toward polar residues. The tract at residues 178 to 214 (TPKGTATSPDTVISSAEPERVSSYPEPTGELKKKTTS) is disordered. A Phosphothreonine modification is found at T182.

The chain is Coiled-coil domain-containing protein 54 (Ccdc54) from Mus musculus (Mouse).